Reading from the N-terminus, the 360-residue chain is Phospho-N-acetylmuramoyl-pentapeptide-transferase (360 aa).

Helical transmembrane passes span 25-45, 73-93, 97-117, 132-152, 168-188, 199-219, 236-256, 263-283, 288-308, and 338-358; these read RGILGVLTALSLALCLGPWMI, TMGGALILSAIGISTLLWADL, YVWVVLLVTLAFGAIGWVDDY, WKYFWQSVFGLGAAIFLYMTA, VSIPLGIGFVVLTYFVIVGSS, GLAIMPTVMVGGALGIFCYLS, AGELIVFCGALIGAGLGFLWF, VFMGDVGALALGAALGTIAVI, IVLFIMGGVFVMETLSVVIQV, and VIVRFWIITVILVLIGLATLK.

The protein belongs to the glycosyltransferase 4 family. MraY subfamily. Mg(2+) is required as a cofactor.

It localises to the cell inner membrane. It catalyses the reaction UDP-N-acetyl-alpha-D-muramoyl-L-alanyl-gamma-D-glutamyl-meso-2,6-diaminopimeloyl-D-alanyl-D-alanine + di-trans,octa-cis-undecaprenyl phosphate = di-trans,octa-cis-undecaprenyl diphospho-N-acetyl-alpha-D-muramoyl-L-alanyl-D-glutamyl-meso-2,6-diaminopimeloyl-D-alanyl-D-alanine + UMP. The protein operates within cell wall biogenesis; peptidoglycan biosynthesis. In terms of biological role, catalyzes the initial step of the lipid cycle reactions in the biosynthesis of the cell wall peptidoglycan: transfers peptidoglycan precursor phospho-MurNAc-pentapeptide from UDP-MurNAc-pentapeptide onto the lipid carrier undecaprenyl phosphate, yielding undecaprenyl-pyrophosphoryl-MurNAc-pentapeptide, known as lipid I. The polypeptide is Phospho-N-acetylmuramoyl-pentapeptide-transferase (Pseudomonas fluorescens (strain ATCC BAA-477 / NRRL B-23932 / Pf-5)).